Reading from the N-terminus, the 307-residue chain is MDPSLSDRGHLLTEQANPASQALDQLSPLELVDLFNQEDQHCLAAVAQAREAIAQAIEYAAQAIARGGRLFYIGAGTSGRLGVLDAAECPPTFCSDPEQVQGILAGGSAAMFRSSEGLEDRAEDGAVAIAEYQIGPRDFILGITAGGTTPYVHGALEAARSAGAKTGFLACVPADQVAIAVDVDIRVPVGPEILAGSTRLKAGTVTKMVLNQISTGAMVRIGKVYGNRMVDVAVTNRKLEDRALRILSDLLSIDRQQAAALLGANERSVKQALLQHWTGLEPAEAAALLTEHQGHLRAAVTAFSSLR.

The SIS domain occupies Ala60–Lys223. Glu88 acts as the Proton donor in catalysis. The active site involves Glu119.

Belongs to the GCKR-like family. MurNAc-6-P etherase subfamily. As to quaternary structure, homodimer.

The catalysed reaction is N-acetyl-D-muramate 6-phosphate + H2O = N-acetyl-D-glucosamine 6-phosphate + (R)-lactate. It functions in the pathway amino-sugar metabolism; N-acetylmuramate degradation. Its function is as follows. Specifically catalyzes the cleavage of the D-lactyl ether substituent of MurNAc 6-phosphate, producing GlcNAc 6-phosphate and D-lactate. The chain is N-acetylmuramic acid 6-phosphate etherase from Synechococcus elongatus (strain ATCC 33912 / PCC 7942 / FACHB-805) (Anacystis nidulans R2).